Reading from the N-terminus, the 493-residue chain is MLKALFLTMLTLALVKSQDTEETITYTQCTDGYEWDPVRQQCKDIDECDIVPDACKGGMKCVNHYGGYLCLPKTAQIIVNNEQPQQETPPAEGTSGATTGVVAASSMATSGVLPGGGFVASAAAVAGPEVQAGRNNFVIRRNPADPQRIPSNPSHRIQCAAGYEQSEHNVCQDIDECTAGTHNCRADQVCINLRGSFACQCPPGYQKRGEQCVDIDECTIPPYCHQRCVNTPGSFYCQCSPGFQLAANNYTCVDINECDASNQCAQQCYNILGSFICQCNQGYELSSDRLNCEDIDECRTSSYLCQYQCVNEPGKFSCMCPQGYQVVRSRTCQDINECETTNECREDEMCWNYHGGFRCYPRNPCQDPYILTPENRCVCPVSNAMCRELPQSIVYKYMSIRSDRSVPSDIFQIQATTIYANTINTFRIKSGNENGEFYLRQTSPVSAMLVLVKSLSGPREHIVDLEMLTVSSIGTFRTSSVLRLTIIVGPFSF.

The signal sequence occupies residues Met-1–Ser-17. Positions Tyr-26–Leu-71 constitute an EGF-like 1; atypical domain. An EGF-like 2; calcium-binding domain is found at Asp-173–Val-213. 15 disulfide bridges follow: Cys-177–Cys-190, Cys-184–Cys-199, Cys-201–Cys-212, Cys-218–Cys-228, Cys-224–Cys-237, Cys-239–Cys-252, Cys-258–Cys-268, Cys-264–Cys-277, Cys-279–Cys-292, Cys-298–Cys-309, Cys-305–Cys-318, Cys-320–Cys-332, Cys-338–Cys-350, Cys-344–Cys-359, and Cys-365–Cys-377. Positions Asp-214 to Val-253 constitute an EGF-like 3; calcium-binding domain. Residue Asn-249 is glycosylated (N-linked (GlcNAc...) asparagine). One can recognise an EGF-like 4; calcium-binding domain in the interval Asp-254–Glu-293. The interval Asp-259 to Phe-493 is mediates interaction with TIMP3. The 40-residue stretch at Asp-294–Gln-333 folds into the EGF-like 5; calcium-binding domain. An EGF-like 6; calcium-binding domain is found at Asp-334–Val-378.

The protein belongs to the fibulin family. In terms of assembly, interacts with ECM1. Interacts with TIMP3.

The protein localises to the secreted. It is found in the extracellular space. It localises to the extracellular matrix. Functionally, binds EGFR, the EGF receptor, inducing EGFR autophosphorylation and the activation of downstream signaling pathways. May play a role in cell adhesion and migration. May function as a negative regulator of chondrocyte differentiation. In the olfactory epithelium, it may regulate glial cell migration, differentiation and the ability of glial cells to support neuronal neurite outgrowth. This chain is EGF-containing fibulin-like extracellular matrix protein 1 (EFEMP1), found in Macaca fascicularis (Crab-eating macaque).